A 32-amino-acid polypeptide reads, in one-letter code: MSQISTKHRTVLFRRWMAIICCLIINIAYLVY.

The protein is Yop proteins translocation protein A (yscA) of Yersinia pestis.